We begin with the raw amino-acid sequence, 287 residues long: Cysteine-rich repeat secretory protein 58 (287 aa).

An N-terminal signal peptide occupies residues 1–20 (METTKKLFALLCLFVTMNQA). Residues 21 to 267 (ISVSDPDDME…GSFSHRGNNK (247 aa)) are Extracellular-facing. 2 Gnk2-homologous domains span residues 28 to 130 (DMET…DKFF) and 135 to 246 (ETNP…TYNS). 9 N-linked (GlcNAc...) asparagine glycosylation sites follow: N39, N43, N59, N68, N89, N99, N107, N208, and N245. Residues 268–286 (LLGGMVLAVSVSVFAFLSL) traverse the membrane as a helical segment. Residue V287 is a topological domain, cytoplasmic.

It belongs to the cysteine-rich repeat secretory protein family.

It localises to the membrane. This Arabidopsis thaliana (Mouse-ear cress) protein is Cysteine-rich repeat secretory protein 58 (CRRSP58).